The following is an 87-amino-acid chain: Glutaredoxin 1 (87 aa).

In terms of domain architecture, Glutaredoxin spans 1–87 (MFTVIFGRPG…WAKENLNLFA (87 aa)). An intrachain disulfide couples Cys-11 to Cys-14.

It belongs to the glutaredoxin family. In terms of assembly, monomer.

In terms of biological role, the disulfide bond functions as an electron carrier in the glutathione-dependent synthesis of deoxyribonucleotides by the enzyme ribonucleotide reductase. In addition, it is also involved in reducing some disulfides in a coupled system with glutathione reductase. The chain is Glutaredoxin 1 (grxA) from Salmonella typhi.